A 208-amino-acid polypeptide reads, in one-letter code: Ras-related protein Rab6 (208 aa).

G19–S27 contributes to the GTP binding site. The Effector region motif lies at Y41 to F49. GTP is bound by residues D67–Q71, N125–D128, and S155–K157. The interval M176–C208 is disordered. Basic and acidic residues predominate over residues T179 to C208.

This sequence belongs to the small GTPase superfamily. Rab family. As to quaternary structure, interacts with Rich and Act5C. Interacts with BicD (via C-terminal domain). Interacts (in GTP-bound) with GCC1/CG10703 and cbs. Interacts with Gorab (via C-terminus); binds to a Gorab homodimer, this interaction seems to be required for trans-Golgi localization of Gorab. Expressed in larval eye, wing and leg imaginal disks and in salivary gland. Expressed in the larval optic lobe, showing an enrichment in the neuropil. In the adult brain, expressed in photoreceptors and mushroom body.

The protein resides in the golgi apparatus membrane. It is found in the synapse. It localises to the perikaryon. In terms of biological role, protein transport. Regulator of membrane traffic from the Golgi apparatus towards the endoplasmic reticulum (ER). Mediates membrane trafficking during egg chamber growth and organization, possibly upstream of exocyst component Sec5. Also during oogenesis, plays a role, together with BicD but independently of Sec5, in the polarization of the oocyte microtubule cytoskeleton, in the localization of oskar mRNA and in the anterodorsal secretion of grk. Required for anterograde opsin transport through the ER-Golgi complex. Plays a role, together with Rich, in regulating CadN transport in photoreceptor cells which is required for the formation of normal synaptic connections between axons from the inner photoreceptor cells in the eye and postsynaptic cells in the brain medulla layer M6. Necessary for proper development of bristle shafts of macrochaete and microchaete on the head, thorax and scutellum. Modulates Notch signaling. As a key regulator of vesicular traffic, plays a critical role in the regulation of actin organization and is required for normal rates of phagocytic uptake during phagocytosis involved in defense against viral and fungal infection. The polypeptide is Ras-related protein Rab6 (Drosophila melanogaster (Fruit fly)).